Reading from the N-terminus, the 827-residue chain is Multiphosphoryl transfer protein (827 aa).

The 141-residue stretch at 2–142 folds into the PTS EIIA type-2 domain; the sequence is IPLTSELVAI…AVIVARLTGA (141 aa). Histidine 62 (tele-phosphohistidine intermediate; for EIIA activity) is an active-site residue. Residue histidine 62 is modified to Phosphohistidine; by HPr. An HPr domain is found at 157–245; that stretch reads AQGIDVVVTG…AFEAGLEDEE (89 aa). Histidine 171 acts as the Pros-phosphohistidine intermediate; for HPr activity in catalysis. Phosphohistidine; by EI is present on histidine 171. Residues 270–827 are PTS EI; it reads EGRTLVGISS…TTAAEVRGLK (558 aa). Histidine 457 acts as the Tele-phosphohistidine intermediate; for PTS EI activity in catalysis. Phosphohistidine; by autocatalysis is present on histidine 457. Phosphoenolpyruvate contacts are provided by arginine 564 and arginine 600. The Mg(2+) site is built by glutamate 693 and aspartate 717. Residues 716–717 and arginine 727 each bind phosphoenolpyruvate; that span reads ND. The Proton donor role is filled by cysteine 764.

This sequence belongs to the PEP-utilizing enzyme family. The cofactor is Mg(2+).

The protein resides in the cytoplasm. It catalyses the reaction L-histidyl-[protein] + phosphoenolpyruvate = N(pros)-phospho-L-histidyl-[protein] + pyruvate. In terms of biological role, the phosphoenolpyruvate-dependent sugar phosphotransferase system (sugar PTS), a major carbohydrate active transport system, catalyzes the phosphorylation of incoming sugar substrates concomitantly with their translocation across the cell membrane. The enzyme II FruAB PTS system is involved in fructose transport. This is Multiphosphoryl transfer protein from Rhodobacter capsulatus (Rhodopseudomonas capsulata).